Reading from the N-terminus, the 738-residue chain is Photosystem I P700 chlorophyll a apoprotein A2 (738 aa).

Transmembrane regions (helical) follow at residues 46 to 69 (LFST…FHIA), 135 to 158 (LYQG…LHLQ), 175 to 199 (LNHH…HVAI), 273 to 291 (IAHH…GHMY), 333 to 356 (LHFQ…QHMY), 372 to 398 (AALY…IFFI), 420 to 442 (AIIS…LYVH), and 521 to 539 (FLVH…LILV). Residues Cys563 and Cys572 each coordinate [4Fe-4S] cluster. 2 consecutive transmembrane segments (helical) span residues 579–600 (AFYL…YWHW) and 647–669 (LAVW…MFLI). Residues His658, Met666, and Tyr674 each coordinate chlorophyll a. Position 675 (Trp675) interacts with phylloquinone. Residues 711–731 (VVGLAHFTIGYILTYAAFLIA) traverse the membrane as a helical segment.

It belongs to the PsaA/PsaB family. In terms of assembly, the PsaA/B heterodimer binds the P700 chlorophyll special pair and subsequent electron acceptors. PSI consists of a core antenna complex that captures photons, and an electron transfer chain that converts photonic excitation into a charge separation. The cyanobacterial PSI reaction center is composed of one copy each of PsaA,B,C,D,E,F,I,J,K,L,M and X, and forms trimeric complexes. PSI electron transfer chain: 5 chlorophyll a, 1 chlorophyll a', 2 phylloquinones and 3 4Fe-4S clusters. PSI core antenna: 90 chlorophyll a, 22 carotenoids, 3 phospholipids and 1 galactolipid. P700 is a chlorophyll a/chlorophyll a' dimer, A0 is one or more chlorophyll a, A1 is one or both phylloquinones and FX is a shared 4Fe-4S iron-sulfur center. is required as a cofactor.

The protein resides in the cellular thylakoid membrane. It catalyses the reaction reduced [plastocyanin] + hnu + oxidized [2Fe-2S]-[ferredoxin] = oxidized [plastocyanin] + reduced [2Fe-2S]-[ferredoxin]. Functionally, psaA and PsaB bind P700, the primary electron donor of photosystem I (PSI), as well as the electron acceptors A0, A1 and FX. PSI is a plastocyanin/cytochrome c6-ferredoxin oxidoreductase, converting photonic excitation into a charge separation, which transfers an electron from the donor P700 chlorophyll pair to the spectroscopically characterized acceptors A0, A1, FX, FA and FB in turn. Oxidized P700 is reduced on the lumenal side of the thylakoid membrane by plastocyanin or cytochrome c6. This chain is Photosystem I P700 chlorophyll a apoprotein A2, found in Synechococcus sp. (strain WH7803).